The sequence spans 181 residues: Biofilm-surface layer protein A (181 aa).

An N-terminal signal peptide occupies residues methionine 1–alanine 28.

This sequence belongs to the BslA/BslB family. In terms of assembly, forms polymers.

It is found in the secreted. The protein localises to the cell wall. Its function is as follows. Involved in biofilm formation. Self-polymerizes and forms a layer on the surface of biofilms that confers hydrophobicity to the biofilm. The layer is stable and capable of resistance to high mechanical force compression. Required for complex colony architecture. May function synergistically with exopolysaccharides and TasA amyloid fibers to facilitate the assembly of the biofilm matrix. The protein is Biofilm-surface layer protein A of Bacillus subtilis (strain 168).